A 156-amino-acid polypeptide reads, in one-letter code: Transcriptional repressor NrdR (156 aa).

A zinc finger lies at 3-34; the sequence is CPFCQHDDTQVLDTRISEEGDSIRRRRRCVSC. One can recognise an ATP-cone domain in the interval 49–139; that stretch reads PVIVKKNGSR…VYKSFEDVAE (91 aa).

The protein belongs to the NrdR family. Requires Zn(2+) as cofactor.

Functionally, negatively regulates transcription of bacterial ribonucleotide reductase nrd genes and operons by binding to NrdR-boxes. This Herminiimonas arsenicoxydans protein is Transcriptional repressor NrdR.